The following is a 402-amino-acid chain: Endo-polygalacturonase (402 aa).

A signal peptide spans 1–23 (MEYQSGKRVLSLSLGLIGLFSAS). Asp-249 (proton donor) is an active-site residue. Residue His-277 is part of the active site.

Belongs to the glycosyl hydrolase 28 family. Monomer.

The protein localises to the secreted. It catalyses the reaction (1,4-alpha-D-galacturonosyl)n+m + H2O = (1,4-alpha-D-galacturonosyl)n + (1,4-alpha-D-galacturonosyl)m.. Involved in maceration and soft-rotting of plant tissue. This chain is Endo-polygalacturonase (peh), found in Pectobacterium carotovorum subsp. carotovorum (Erwinia carotovora subsp. carotovora).